Reading from the N-terminus, the 274-residue chain is Dermonecrotic toxin SdSicTox-betaIIB1bx (274 aa).

His5 is a catalytic residue. Mg(2+) contacts are provided by Glu25 and Asp27. Residue His41 is the Nucleophile of the active site. Disulfide bonds link Cys45–Cys51 and Cys47–Cys190. Asp85 is a binding site for Mg(2+).

It belongs to the arthropod phospholipase D family. Class II subfamily. Mg(2+) serves as cofactor. In terms of tissue distribution, expressed by the venom gland.

Its subcellular location is the secreted. It catalyses the reaction an N-(acyl)-sphingosylphosphocholine = an N-(acyl)-sphingosyl-1,3-cyclic phosphate + choline. The catalysed reaction is an N-(acyl)-sphingosylphosphoethanolamine = an N-(acyl)-sphingosyl-1,3-cyclic phosphate + ethanolamine. It carries out the reaction a 1-acyl-sn-glycero-3-phosphocholine = a 1-acyl-sn-glycero-2,3-cyclic phosphate + choline. The enzyme catalyses a 1-acyl-sn-glycero-3-phosphoethanolamine = a 1-acyl-sn-glycero-2,3-cyclic phosphate + ethanolamine. Functionally, dermonecrotic toxins cleave the phosphodiester linkage between the phosphate and headgroup of certain phospholipids (sphingolipid and lysolipid substrates), forming an alcohol (often choline) and a cyclic phosphate. This toxin acts on sphingomyelin (SM). It may also act on ceramide phosphoethanolamine (CPE), lysophosphatidylcholine (LPC) and lysophosphatidylethanolamine (LPE), but not on lysophosphatidylserine (LPS), and lysophosphatidylglycerol (LPG). It acts by transphosphatidylation, releasing exclusively cyclic phosphate products as second products. Induces dermonecrosis, hemolysis, increased vascular permeability, edema, inflammatory response, and platelet aggregation. The protein is Dermonecrotic toxin SdSicTox-betaIIB1bx of Sicarius cf. damarensis (strain GJB-2008) (Six-eyed sand spider).